The following is an 835-amino-acid chain: Neuroligin-2 (835 aa).

Residues 1–14 (MWLLALCLVGLAGA) form the signal peptide. The Extracellular portion of the chain corresponds to 15–677 (QRGGGGPGGG…DSRDYSTELS (663 aa)). N-linked (GlcNAc...) asparagine glycosylation is found at N98 and N136. 3 cysteine pairs are disulfide-bonded: C106/C141, C317/C328, and C487/C521. N522 is a glycosylation site (N-linked (GlcNAc...) asparagine). The interval 623–668 (PPYATRWPPRPPAGAPGTRRPPPPATLPPEPEPEPGPRAYDRFPGD) is disordered. Residues 630-658 (PPRPPAGAPGTRRPPPPATLPPEPEPEPG) are compositionally biased toward pro residues. The chain crosses the membrane as a helical span at residues 678 to 698 (VTVAVGASLLFLNILAFAALY). The required for interaction with LHFPL4 stretch occupies residues 678–698 (VTVAVGASLLFLNILAFAALY). The Cytoplasmic segment spans residues 699–835 (YKRDRRQELR…LPHPHSTTRV (137 aa)). 2 positions are modified to phosphoserine: S713 and S718. The disordered stretch occupies residues 790-835 (LLPSGLGPPPPPPPPSLHPFGPFPPPPPTATSHNNTLPHPHSTTRV). Residues 795 to 818 (LGPPPPPPPPSLHPFGPFPPPPPT) are compositionally biased toward pro residues. Over residues 823–835 (NNTLPHPHSTTRV) the composition is skewed to polar residues.

This sequence belongs to the type-B carboxylesterase/lipase family. As to quaternary structure, interacts with neurexins NRXN1, NRXN2 and NRXN3. Interaction with neurexins is mediated by heparan sulfate glycan modification on neurexin. Interacts (via its C-terminus) with DLG4/PSD-95 (via PDZ domain 3). Interacts with PATJ. Interacts with GPHN. Interacts with MDGA1 and MDGA2. Found in a complex with MAGI2 and IGSF9B, where it interacts with MAGI2 (via WW 1, WW 2 and PDZ 2 domains). Identified in a complex of 720 kDa composed of LHFPL4, NLGN2, GABRA1, GABRB2, GABRG2 and GABRB3. Interacts with LHFPL4; leading to mutual regulation of the protein level and synaptic clustering. Interacts with NLGN2. In terms of tissue distribution, expressed in the blood vessel walls. Detected in colon, brain and pancreas islets of Langerhans (at protein level). Detected in brain, and at lower levels in pancreas islet beta cells.

The protein localises to the cell membrane. It localises to the postsynaptic cell membrane. It is found in the presynaptic cell membrane. Its function is as follows. Transmembrane scaffolding protein involved in cell-cell interactions via its interactions with neurexin family members. Mediates cell-cell interactions both in neurons and in other types of cells, such as Langerhans beta cells. Plays a role in synapse function and synaptic signal transmission, especially via gamma-aminobutyric acid receptors (GABA(A) receptors). Functions by recruiting and clustering synaptic proteins. Promotes clustering of postsynaptic GABRG2 and GPHN. Promotes clustering of postsynaptic LHFPL4. Modulates signaling by inhibitory synapses, and thereby plays a role in controlling the ratio of signaling by excitatory and inhibitory synapses and information processing. Required for normal signal amplitude from inhibitory synapses, but is not essential for normal signal frequency. May promote the initial formation of synapses, but is not essential for this. In vitro, triggers the de novo formation of presynaptic structures. Mediates cell-cell interactions between Langerhans beta cells and modulates insulin secretion. This is Neuroligin-2 (NLGN2) from Homo sapiens (Human).